Reading from the N-terminus, the 101-residue chain is Enhancer of yellow 2 transcription factor (101 aa).

The protein belongs to the ENY2 family. Component of the nuclear pore complex (NPC)-associated AMEX complex (anchoring and mRNA export complex), composed of at least e(y)2 and xmas-2. Component of the SAGA transcription coactivator-HAT complexes, at least composed of Ada2b, e(y)2, Pcaf/Gcn5, Taf10 and Nipped-A/Trrap. Within the SAGA complex, e(y)2, Sgf11, and not/nonstop form an additional subcomplex of SAGA called the DUB module (deubiquitination module). Component of the THO complex, composed of at least e(y)2, HPR1, THO2, THOC5, THOC6 and THOC7. Interacts with e(y)1. Interacts with su(Hw) (via zinc fingers). Interacts with xmas-2; required for localization to the nuclear periphery. Interacts with the nuclear pore complex (NPC).

The protein localises to the nucleus. It is found in the nucleoplasm. The protein resides in the cytoplasm. Involved in mRNA export coupled transcription activation by association with both the AMEX and the SAGA complexes. The SAGA complex is a multiprotein complex that activates transcription by remodeling chromatin and mediating histone acetylation and deubiquitination. Within the SAGA complex, participates in a subcomplex that specifically deubiquitinates histone H2B. The SAGA complex is recruited to specific gene promoters by activators, where it is required for transcription. Required for nuclear receptor-mediated transactivation. Involved in transcription elongation by recruiting the THO complex onto nascent mRNA. The AMEX complex functions in docking export-competent ribonucleoprotein particles (mRNPs) to the nuclear entrance of the nuclear pore complex (nuclear basket). AMEX participates in mRNA export and accurate chromatin positioning in the nucleus by tethering genes to the nuclear periphery. The protein is Enhancer of yellow 2 transcription factor of Drosophila yakuba (Fruit fly).